Reading from the N-terminus, the 111-residue chain is MESKFAHIIVFFLLATSFETLMARKEIDGPEVIELLKEFDSNLMCEGKQMWPELIGVPTKLAKEIIEKENPSITNIPILLSGSPITLDYLCDRVRLFDNILGFVVQMPVVT.

An N-terminal signal peptide occupies residues methionine 1 to alanine 23. The propeptide occupies arginine 24–leucine 36.

It belongs to the protease inhibitor I13 (potato type I serine protease inhibitor) family.

It is found in the secreted. This is Wound-induced proteinase inhibitor 1 (PIIF) from Solanum lycopersicum (Tomato).